The chain runs to 272 residues: Dickkopf-related protein 1 (272 aa).

A signal peptide spans 1–31; that stretch reads MMVVCAAAAVRFLAVFTMMALCSLPLLGASA. Serine 62 carries an O-linked (GalNAc...) serine glycan. Intrachain disulfides connect cysteine 86-cysteine 98, cysteine 92-cysteine 114, cysteine 117-cysteine 131, cysteine 124-cysteine 136, cysteine 130-cysteine 141, cysteine 195-cysteine 207, cysteine 201-cysteine 216, cysteine 206-cysteine 243, cysteine 226-cysteine 251, and cysteine 245-cysteine 269. The tract at residues 86-141 is DKK-type Cys-1; that stretch reads CAEDEECGSDEYCSSPSRGAAGVGGVQICLACRKRRKRCMRHAMCCPGNYCKNGIC. The interval 195-269 is DKK-type Cys-2; it reads CLRSSDCAAG…ASNSSRLHTC (75 aa). Asparagine 262 carries an N-linked (GlcNAc...) asparagine glycan.

It belongs to the dickkopf family. As to quaternary structure, interacts (via the C-terminal Cys-rich domain) with LRP5 (via beta-propeller regions 3 and 4); the interaction, enhanced by MESD and or KREMEN, antagonizes Wnt-mediated signaling. Interacts with LRP6. Forms a ternary complex with LRP6 and KREM1. Interacts with KREM1.

It is found in the secreted. Its function is as follows. Antagonizes canonical Wnt signaling by inhibiting LRP5/6 interaction with Wnt and by forming a ternary complex with the transmembrane protein KREMEN that promotes internalization of LRP5/6. Inhibits the pro-apoptotic function of KREMEN1 in a Wnt-independent manner, and has anti-apoptotic activity. Plays a role in limb development; attenuates Wnt signaling in the developing limb to allow normal limb patterning. This is Dickkopf-related protein 1 (Dkk1) from Mus musculus (Mouse).